Reading from the N-terminus, the 443-residue chain is Phosphoglucosamine mutase (443 aa).

Ser102 acts as the Phosphoserine intermediate in catalysis. Mg(2+) contacts are provided by Ser102, Asp241, Asp243, and Asp245. Position 102 is a phosphoserine (Ser102).

Belongs to the phosphohexose mutase family. Mg(2+) serves as cofactor. Activated by phosphorylation.

The enzyme catalyses alpha-D-glucosamine 1-phosphate = D-glucosamine 6-phosphate. In terms of biological role, catalyzes the conversion of glucosamine-6-phosphate to glucosamine-1-phosphate. The polypeptide is Phosphoglucosamine mutase (Polaromonas sp. (strain JS666 / ATCC BAA-500)).